A 578-amino-acid polypeptide reads, in one-letter code: Vesicular acetylcholine transporter (578 aa).

Topologically, residues methionine 1–arginine 32 are cytoplasmic. A helical transmembrane segment spans residues leucine 33–valine 53. At proline 54–glycine 98 the chain is on the lumenal, vesicle side. Asparagine 78 is a glycosylation site (N-linked (GlcNAc...) asparagine). A helical transmembrane segment spans residues isoleucine 99–isoleucine 119. Residues aspartate 120 to aspartate 125 lie on the Cytoplasmic side of the membrane. A helical transmembrane segment spans residues leucine 126–serine 146. Over serine 147 to alanine 154 the chain is Lumenal, vesicle. Residues arginine 155–aspartate 175 traverse the membrane as a helical segment. The Cytoplasmic portion of the chain corresponds to arginine 176 to leucine 187. The chain crosses the membrane as a helical span at residues glycine 188–leucine 208. Topologically, residues tyrosine 209 to glutamate 215 are lumenal, vesicle. Residues valine 216–methionine 236 traverse the membrane as a helical segment. The Cytoplasmic portion of the chain corresponds to lysine 237 to proline 263. A helical transmembrane segment spans residues tyrosine 264 to proline 284. Over threonine 285–tryptophan 299 the chain is Lumenal, vesicle. An N-linked (GlcNAc...) asparagine glycan is attached at asparagine 293. Residues lysine 300–valine 320 form a helical membrane-spanning segment. Topologically, residues lysine 321 to glutamine 330 are cytoplasmic. The chain crosses the membrane as a helical span at residues tryptophan 331–cysteine 351. The Lumenal, vesicle portion of the chain corresponds to serine 352 to lysine 355. The chain crosses the membrane as a helical span at residues methionine 356–leucine 376. The Cytoplasmic portion of the chain corresponds to proline 377–tyrosine 387. Residues valine 388–valine 408 form a helical membrane-spanning segment. Residues glycine 409–alanine 413 are Lumenal, vesicle-facing. Residues glycine 414–leucine 434 form a helical membrane-spanning segment. Over alanine 435 to phenylalanine 578 the chain is Cytoplasmic. Low complexity-rich tracts occupy residues glutamate 507–glycine 534 and glutamine 549–glutamine 563. The tract at residues glutamate 507–phenylalanine 578 is disordered.

It belongs to the major facilitator superfamily. Vesicular transporter family.

It localises to the membrane. In terms of biological role, involved in acetylcholine transport into synaptic vesicles. The sequence is that of Vesicular acetylcholine transporter (VAChT) from Drosophila melanogaster (Fruit fly).